The sequence spans 73 residues: Beta-defensin 10 (73 aa).

A signal peptide spans 1-23; that stretch reads MRTLCSLLLICCLLFSYTTPAVG. 3 cysteine pairs are disulfide-bonded: Cys-37–Cys-66, Cys-44–Cys-59, and Cys-49–Cys-67.

The protein belongs to the beta-defensin family. Expressed in both adult and neonate brain, and very weakly in kidneys, epididymis, and testis.

Its subcellular location is the secreted. Its function is as follows. Has antibacterial activity. The sequence is that of Beta-defensin 10 (Defb10) from Mus musculus (Mouse).